The sequence spans 69 residues: UPF0437 protein AZC_3451 (69 aa).

This sequence belongs to the UPF0437 family.

This is UPF0437 protein AZC_3451 from Azorhizobium caulinodans (strain ATCC 43989 / DSM 5975 / JCM 20966 / LMG 6465 / NBRC 14845 / NCIMB 13405 / ORS 571).